We begin with the raw amino-acid sequence, 496 residues long: NADH-ubiquinone oxidoreductase 51 kDa subunit, mitochondrial (496 aa).

A mitochondrion-targeting transit peptide spans 1–30 (MISRAAAPSSSIASLSSRSLRAQAPAARSF). Residue 98–107 (GRGGAGFPSG) participates in NAD(+) binding. An FMN-binding site is contributed by 214 to 261 (GMGAYVCGEETSLIESIEGKAGKPRLKPPFPAAVGLFGCPSTVTNVET). The [4Fe-4S] cluster site is built by cysteine 393, cysteine 396, cysteine 399, and cysteine 439.

This sequence belongs to the complex I 51 kDa subunit family. Complex I is composed of about 40 different subunits. This is a component of the flavoprotein-sulfur (FP) fragment of the enzyme. FMN serves as cofactor. Requires [4Fe-4S] cluster as cofactor.

It is found in the mitochondrion inner membrane. It catalyses the reaction a ubiquinone + NADH + 5 H(+)(in) = a ubiquinol + NAD(+) + 4 H(+)(out). Core subunit of the mitochondrial membrane respiratory chain NADH dehydrogenase (Complex I) that is believed to belong to the minimal assembly required for catalysis. Complex I functions in the transfer of electrons from NADH to the respiratory chain. The immediate electron acceptor for the enzyme is believed to be ubiquinone. This Aspergillus niger protein is NADH-ubiquinone oxidoreductase 51 kDa subunit, mitochondrial (NUO51).